A 412-amino-acid polypeptide reads, in one-letter code: Peptidase T (412 aa).

Histidine 84 contacts Zn(2+). Residue aspartate 86 is part of the active site. A Zn(2+)-binding site is contributed by aspartate 146. The active-site Proton acceptor is glutamate 179. 3 residues coordinate Zn(2+): glutamate 180, aspartate 202, and histidine 385.

Belongs to the peptidase M20B family. Zn(2+) is required as a cofactor.

Its subcellular location is the cytoplasm. The enzyme catalyses Release of the N-terminal residue from a tripeptide.. Its function is as follows. Cleaves the N-terminal amino acid of tripeptides. In Haemophilus influenzae (strain 86-028NP), this protein is Peptidase T.